Here is a 105-residue protein sequence, read N- to C-terminus: Met repressor (105 aa).

Belongs to the MetJ family. In terms of assembly, homodimer.

It is found in the cytoplasm. Its function is as follows. This regulatory protein, when combined with SAM (S-adenosylmethionine) represses the expression of the methionine regulon and of enzymes involved in SAM synthesis. In Klebsiella pneumoniae subsp. pneumoniae (strain ATCC 700721 / MGH 78578), this protein is Met repressor.